The primary structure comprises 184 residues: Endoribonuclease YbeY (184 aa).

Zn(2+) is bound by residues His118, His122, and His128. Positions 156-184 (YHQDRQSQKDQRLLDKSRYFDELNHGDTP) are disordered. The span at 157–184 (HQDRQSQKDQRLLDKSRYFDELNHGDTP) shows a compositional bias: basic and acidic residues.

It belongs to the endoribonuclease YbeY family. Zn(2+) is required as a cofactor.

The protein resides in the cytoplasm. In terms of biological role, single strand-specific metallo-endoribonuclease involved in late-stage 70S ribosome quality control and in maturation of the 3' terminus of the 16S rRNA. This Mycolicibacterium vanbaalenii (strain DSM 7251 / JCM 13017 / BCRC 16820 / KCTC 9966 / NRRL B-24157 / PYR-1) (Mycobacterium vanbaalenii) protein is Endoribonuclease YbeY.